A 189-amino-acid chain; its full sequence is uncharacterized protein (189 aa).

It belongs to the isochorismatase family.

This is an uncharacterized protein from Bacillus subtilis (strain 168).